The primary structure comprises 225 residues: Cytidylate kinase (225 aa).

11 to 19 (GPAGAGKGT) is a binding site for ATP. The span at 169–185 (MDRIKSRIEERDARDQS) shows a compositional bias: basic and acidic residues. A disordered region spans residues 169–195 (MDRIKSRIEERDARDQSRATAPLAAAP).

This sequence belongs to the cytidylate kinase family. Type 1 subfamily.

The protein resides in the cytoplasm. The catalysed reaction is CMP + ATP = CDP + ADP. The enzyme catalyses dCMP + ATP = dCDP + ADP. This Magnetococcus marinus (strain ATCC BAA-1437 / JCM 17883 / MC-1) protein is Cytidylate kinase.